The sequence spans 338 residues: NLP effector protein 6 (338 aa).

Positions 1–19 (MRFTTIFWISLTVLATVRA) are cleaved as a signal peptide. Residues 68-119 (LTLSPSASSPAKRNVTLPPDTTMRPDPRQTEPPTEAPTPASTPAPTPDPGPW) are disordered. Asn81 is a glycosylation site (N-linked (GlcNAc...) asparagine). Residues 101-117 (TEAPTPASTPAPTPDPG) show a composition bias toward pro residues. A Conserved undecapeptide motif I motif is present at residues 205–215 (AIMYSWYFPKD). Positions 222 to 227 (GHRHDW) match the Hepta-peptide GHRHDWE motif II motif.

This sequence belongs to the Necrosis inducing protein (NPP1) family.

The protein localises to the secreted. Secreted effector that contributes strongly to virulence during infection by P.capsici. Causes large necrotic areas in both host C.annuum and non-host N.benthamiana. This Phytophthora capsici protein is NLP effector protein 6.